Here is a 415-residue protein sequence, read N- to C-terminus: Mechanosensing system component YbdG (415 aa).

Residues 1-24 (MQDLISQVEDLAGIEIDHTTSMVM) are Periplasmic-facing. The chain crosses the membrane as a helical span at residues 25-45 (IFGIIFLTAVVVHIILHWVVL). Residues 46–67 (RTFEKRAIASSRLWLQIITQNK) are Cytoplasmic-facing. Residues 68-88 (LFHRLAFTLQGIIVNIQAVFW) form a helical membrane-spanning segment. The Periplasmic segment spans residues 89–104 (LQKGTEAADILTTCAQ). Residues 105-125 (LWIMMYALLSVFSLLDVILNL) form a helical membrane-spanning segment. The Cytoplasmic portion of the chain corresponds to 126 to 148 (AQKFPAASQLPLKGIFQGIKLIG). The helical transmembrane segment at 149-169 (AILVGILMISLLIGQSPAILI) threads the bilayer. The Periplasmic segment spans residues 170–173 (SGLG). Residues 174-194 (AMAAVLMLVFKDPILGLVAGI) form a helical membrane-spanning segment. Residues 195–415 (QLSANDMLKL…IRSLAGAFKQ (221 aa)) are Cytoplasmic-facing.

This sequence belongs to the MscS (TC 1.A.23) family. As to quaternary structure, homoheptamer.

The protein resides in the cell inner membrane. Functionally, functions as a component of a mechanosensing system that transmits signals triggered by external osmotic changes to intracellular factors. This chain is Mechanosensing system component YbdG (ybdG), found in Shigella flexneri.